The sequence spans 361 residues: NudC domain-containing protein 3 (361 aa).

The segment covering 87–97 has biased composition (basic and acidic residues); sequence KIRRKEEEEAK. A disordered region spans residues 87–106; that stretch reads KIRRKEEEEAKTVSAAAAEK. Position 146 is a phosphoserine (Ser-146). One can recognise a CS domain in the interval 185 to 277; sequence AVRENYTWSQ…VGEYWWNAIL (93 aa). Residues Ser-340 and Ser-355 each carry the phosphoserine modification.

This chain is NudC domain-containing protein 3 (NUDCD3), found in Pongo abelii (Sumatran orangutan).